Consider the following 236-residue polypeptide: 3-deoxy-D-manno-octulosonic acid kinase (236 aa).

The active site involves Asp-166.

Belongs to the protein kinase superfamily. KdkA/RfaP family.

It localises to the cell inner membrane. The catalysed reaction is an alpha-Kdo-(2-&gt;6)-lipid IVA + ATP = a 4-O-phospho-alpha-Kdo-(2-&gt;6)-lipid IVA + ADP + H(+). The protein operates within bacterial outer membrane biogenesis; LPS core biosynthesis. Catalyzes the ATP-dependent phosphorylation of the 3-deoxy-D-manno-octulosonic acid (Kdo) residue in Kdo-lipid IV(A) at the 4-OH position. The chain is 3-deoxy-D-manno-octulosonic acid kinase from Photobacterium profundum (strain SS9).